Reading from the N-terminus, the 456-residue chain is Kynurenine 3-monooxygenase (456 aa).

This sequence belongs to the aromatic-ring hydroxylase family. KMO subfamily. It depends on FAD as a cofactor.

It catalyses the reaction L-kynurenine + NADPH + O2 + H(+) = 3-hydroxy-L-kynurenine + NADP(+) + H2O. Its pathway is cofactor biosynthesis; NAD(+) biosynthesis; quinolinate from L-kynurenine: step 1/3. In terms of biological role, catalyzes the hydroxylation of L-kynurenine (L-Kyn) to form 3-hydroxy-L-kynurenine (L-3OHKyn). Required for synthesis of quinolinic acid. In Xanthomonas campestris pv. campestris (strain 8004), this protein is Kynurenine 3-monooxygenase.